Reading from the N-terminus, the 415-residue chain is NPL4-like protein (415 aa).

Positions 130–279 (AASFDRDSAN…FEAFQMSEIC (150 aa)) constitute an MPN domain.

It belongs to the NPL4 family.

The protein resides in the endoplasmic reticulum. Its pathway is protein degradation; proteasomal ubiquitin-dependent pathway. Its function is as follows. May be part of a complex that binds ubiquitinated proteins and that is necessary for the export of misfolded proteins from the ER to the cytoplasm, where they are degraded by the proteasome. This chain is NPL4-like protein, found in Oryza sativa subsp. japonica (Rice).